The chain runs to 363 residues: tRNA/tmRNA (uracil-C(5))-methyltransferase (363 aa).

Positions 187, 215, 220, 236, and 296 each coordinate S-adenosyl-L-methionine. The active-site Nucleophile is Cys-321. Glu-355 functions as the Proton acceptor in the catalytic mechanism.

Belongs to the class I-like SAM-binding methyltransferase superfamily. RNA M5U methyltransferase family. TrmA subfamily.

The enzyme catalyses uridine(54) in tRNA + S-adenosyl-L-methionine = 5-methyluridine(54) in tRNA + S-adenosyl-L-homocysteine + H(+). It carries out the reaction uridine(341) in tmRNA + S-adenosyl-L-methionine = 5-methyluridine(341) in tmRNA + S-adenosyl-L-homocysteine + H(+). Its function is as follows. Dual-specificity methyltransferase that catalyzes the formation of 5-methyluridine at position 54 (m5U54) in all tRNAs, and that of position 341 (m5U341) in tmRNA (transfer-mRNA). The sequence is that of tRNA/tmRNA (uracil-C(5))-methyltransferase from Pseudomonas paraeruginosa (strain DSM 24068 / PA7) (Pseudomonas aeruginosa (strain PA7)).